A 250-amino-acid chain; its full sequence is Leucyl/phenylalanyl-tRNA--protein transferase (250 aa).

It belongs to the L/F-transferase family.

Its subcellular location is the cytoplasm. It catalyses the reaction N-terminal L-lysyl-[protein] + L-leucyl-tRNA(Leu) = N-terminal L-leucyl-L-lysyl-[protein] + tRNA(Leu) + H(+). The catalysed reaction is N-terminal L-arginyl-[protein] + L-leucyl-tRNA(Leu) = N-terminal L-leucyl-L-arginyl-[protein] + tRNA(Leu) + H(+). The enzyme catalyses L-phenylalanyl-tRNA(Phe) + an N-terminal L-alpha-aminoacyl-[protein] = an N-terminal L-phenylalanyl-L-alpha-aminoacyl-[protein] + tRNA(Phe). In terms of biological role, functions in the N-end rule pathway of protein degradation where it conjugates Leu, Phe and, less efficiently, Met from aminoacyl-tRNAs to the N-termini of proteins containing an N-terminal arginine or lysine. This is Leucyl/phenylalanyl-tRNA--protein transferase from Xanthomonas oryzae pv. oryzae (strain MAFF 311018).